Here is a 444-residue protein sequence, read N- to C-terminus: Phosphoglucosamine mutase (444 aa).

Ser-102 serves as the catalytic Phosphoserine intermediate. The Mg(2+) site is built by Ser-102, Asp-241, Asp-243, and Asp-245. Ser-102 carries the post-translational modification Phosphoserine.

This sequence belongs to the phosphohexose mutase family. Mg(2+) serves as cofactor. Activated by phosphorylation.

It carries out the reaction alpha-D-glucosamine 1-phosphate = D-glucosamine 6-phosphate. In terms of biological role, catalyzes the conversion of glucosamine-6-phosphate to glucosamine-1-phosphate. The protein is Phosphoglucosamine mutase of Paracidovorax citrulli (strain AAC00-1) (Acidovorax citrulli).